Reading from the N-terminus, the 215-residue chain is Glycerol-3-phosphate acyltransferase (215 aa).

A run of 6 helical transmembrane segments spans residues 3–23 (LILL…LWIG), 42–61 (TNTF…LIDI), 68–90 (TLLP…FAVL), 110–130 (AGVL…VFVL), 134–154 (LFSM…ISVL), and 162–182 (LLPG…AIII).

Belongs to the PlsY family. In terms of assembly, probably interacts with PlsX.

It is found in the cell membrane. It catalyses the reaction an acyl phosphate + sn-glycerol 3-phosphate = a 1-acyl-sn-glycero-3-phosphate + phosphate. It functions in the pathway lipid metabolism; phospholipid metabolism. In terms of biological role, catalyzes the transfer of an acyl group from acyl-phosphate (acyl-PO(4)) to glycerol-3-phosphate (G3P) to form lysophosphatidic acid (LPA). This enzyme utilizes acyl-phosphate as fatty acyl donor, but not acyl-CoA or acyl-ACP. The polypeptide is Glycerol-3-phosphate acyltransferase (Streptococcus equi subsp. zooepidemicus (strain MGCS10565)).